The sequence spans 394 residues: Elongation factor Tu 2 (394 aa).

Residues K10–E204 enclose the tr-type G domain. Residues G19–T26 are G1. G19–T26 is a binding site for GTP. T26 provides a ligand contact to Mg(2+). The G2 stretch occupies residues G60–N64. The segment at D81–G84 is G3. Residues D81–H85 and N136–D139 each bind GTP. The G4 stretch occupies residues N136–D139. The segment at S174–L176 is G5.

The protein belongs to the TRAFAC class translation factor GTPase superfamily. Classic translation factor GTPase family. EF-Tu/EF-1A subfamily. As to quaternary structure, monomer.

It is found in the cytoplasm. The enzyme catalyses GTP + H2O = GDP + phosphate + H(+). In terms of biological role, GTP hydrolase that promotes the GTP-dependent binding of aminoacyl-tRNA to the A-site of ribosomes during protein biosynthesis. In Shigella flexneri serotype 5b (strain 8401), this protein is Elongation factor Tu 2.